The following is a 219-amino-acid chain: Proteasome subunit beta type-9 (219 aa).

Residues 1–20 (MLRAGAPTAGSFRTEEVHTG) constitute a propeptide, removed in mature form. Threonine 21 acts as the Nucleophile in catalysis. Residues lysine 53 and lysine 109 each carry the N6-acetyllysine modification.

This sequence belongs to the peptidase T1B family. As to quaternary structure, the 26S proteasome consists of a 20S proteasome core and two 19S regulatory subunits. The 20S proteasome core is composed of 28 subunits that are arranged in four stacked rings, resulting in a barrel-shaped structure. The two end rings are each formed by seven alpha subunits, and the two central rings are each formed by seven beta subunits. The catalytic chamber with the active sites is on the inside of the barrel. Component of the immunoproteasome, where it displaces the equivalent housekeeping subunit PSMB6. Component of the spermatoproteasome, a form of the proteasome specifically found in testis. In terms of processing, autocleaved. The resulting N-terminal Thr residue of the mature subunit is responsible for the nucleophile proteolytic activity.

It is found in the cytoplasm. Its subcellular location is the nucleus. It catalyses the reaction Cleavage of peptide bonds with very broad specificity.. In terms of biological role, the proteasome is a multicatalytic proteinase complex which is characterized by its ability to cleave peptides with Arg, Phe, Tyr, Leu, and Glu adjacent to the leaving group at neutral or slightly basic pH. The proteasome has an ATP-dependent proteolytic activity. This subunit is involved in antigen processing to generate class I binding peptides. The protein is Proteasome subunit beta type-9 (Psmb9) of Mus musculus bactrianus (Southwestern Asian house mouse).